The chain runs to 173 residues: Glutamyl-tRNA(Gln) amidotransferase subunit C-1, mitochondrial (173 aa).

A mitochondrion-targeting transit peptide spans 1 to 23; that stretch reads MIRIPFRLRPPPGRTLHSLVRTF. The interval 51-70 is disordered; sequence PSKVPQRPHKSTTTVGQSTP. The span at 61-70 shows a compositional bias: polar residues; the sequence is STTTVGQSTP.

This sequence belongs to the GatC family. Subunit of the heterotrimeric GatCAB amidotransferase (AdT) complex, composed of A, B and C subunits.

The protein localises to the mitochondrion. The catalysed reaction is L-glutamyl-tRNA(Gln) + L-glutamine + ATP + H2O = L-glutaminyl-tRNA(Gln) + L-glutamate + ADP + phosphate + H(+). In terms of biological role, allows the formation of correctly charged Gln-tRNA(Gln) through the transamidation of misacylated Glu-tRNA(Gln) in the mitochondria. The reaction takes place in the presence of glutamine and ATP through an activated gamma-phospho-Glu-tRNA(Gln). This is Glutamyl-tRNA(Gln) amidotransferase subunit C-1, mitochondrial from Culex quinquefasciatus (Southern house mosquito).